We begin with the raw amino-acid sequence, 283 residues long: Elongation factor Ts (283 aa).

The involved in Mg(2+) ion dislocation from EF-Tu stretch occupies residues 79 to 82 (TDFV).

It belongs to the EF-Ts family.

It localises to the cytoplasm. In terms of biological role, associates with the EF-Tu.GDP complex and induces the exchange of GDP to GTP. It remains bound to the aminoacyl-tRNA.EF-Tu.GTP complex up to the GTP hydrolysis stage on the ribosome. The sequence is that of Elongation factor Ts from Shewanella denitrificans (strain OS217 / ATCC BAA-1090 / DSM 15013).